The following is a 281-amino-acid chain: UDP-N-acetylenolpyruvoylglucosamine reductase (281 aa).

In terms of domain architecture, FAD-binding PCMH-type spans 17–180 (VGGKAKKLII…LSATFKFDNG (164 aa)). R159 is an active-site residue. The active-site Proton donor is the S206. The active site involves E276.

This sequence belongs to the MurB family. It depends on FAD as a cofactor.

Its subcellular location is the cytoplasm. It catalyses the reaction UDP-N-acetyl-alpha-D-muramate + NADP(+) = UDP-N-acetyl-3-O-(1-carboxyvinyl)-alpha-D-glucosamine + NADPH + H(+). Its pathway is cell wall biogenesis; peptidoglycan biosynthesis. Its function is as follows. Cell wall formation. This Fusobacterium nucleatum subsp. nucleatum (strain ATCC 25586 / DSM 15643 / BCRC 10681 / CIP 101130 / JCM 8532 / KCTC 2640 / LMG 13131 / VPI 4355) protein is UDP-N-acetylenolpyruvoylglucosamine reductase.